Reading from the N-terminus, the 151-residue chain is SsrA-binding protein (151 aa).

The tract at residues 124–151 is disordered; that stretch reads GKKLHDKRESEKERDWNRQKSRLLKAHG. Basic and acidic residues predominate over residues 129 to 141; that stretch reads DKRESEKERDWNR. Basic residues predominate over residues 142 to 151; it reads QKSRLLKAHG.

It belongs to the SmpB family.

Its subcellular location is the cytoplasm. Functionally, required for rescue of stalled ribosomes mediated by trans-translation. Binds to transfer-messenger RNA (tmRNA), required for stable association of tmRNA with ribosomes. tmRNA and SmpB together mimic tRNA shape, replacing the anticodon stem-loop with SmpB. tmRNA is encoded by the ssrA gene; the 2 termini fold to resemble tRNA(Ala) and it encodes a 'tag peptide', a short internal open reading frame. During trans-translation Ala-aminoacylated tmRNA acts like a tRNA, entering the A-site of stalled ribosomes, displacing the stalled mRNA. The ribosome then switches to translate the ORF on the tmRNA; the nascent peptide is terminated with the 'tag peptide' encoded by the tmRNA and targeted for degradation. The ribosome is freed to recommence translation, which seems to be the essential function of trans-translation. In Rhizobium johnstonii (strain DSM 114642 / LMG 32736 / 3841) (Rhizobium leguminosarum bv. viciae), this protein is SsrA-binding protein.